A 520-amino-acid polypeptide reads, in one-letter code: Peptide chain release factor 3 (520 aa).

Residues 8–277 (ESRKTFAIIS…HAPMPNARQT (270 aa)) form the tr-type G domain. Residues 17–24 (SHPDAGKT), 85–89 (DTPGH), and 139–142 (NKLD) each bind GTP.

The protein belongs to the TRAFAC class translation factor GTPase superfamily. Classic translation factor GTPase family. PrfC subfamily.

Its subcellular location is the cytoplasm. Its function is as follows. Increases the formation of ribosomal termination complexes and stimulates activities of RF-1 and RF-2. It binds guanine nucleotides and has strong preference for UGA stop codons. It may interact directly with the ribosome. The stimulation of RF-1 and RF-2 is significantly reduced by GTP and GDP, but not by GMP. In Staphylococcus saprophyticus subsp. saprophyticus (strain ATCC 15305 / DSM 20229 / NCIMB 8711 / NCTC 7292 / S-41), this protein is Peptide chain release factor 3.